Here is a 141-residue protein sequence, read N- to C-terminus: Large ribosomal subunit protein uL11 (141 aa).

The protein belongs to the universal ribosomal protein uL11 family. In terms of assembly, part of the ribosomal stalk of the 50S ribosomal subunit. Interacts with L10 and the large rRNA to form the base of the stalk. L10 forms an elongated spine to which L12 dimers bind in a sequential fashion forming a multimeric L10(L12)X complex. Post-translationally, one or more lysine residues are methylated.

Its function is as follows. Forms part of the ribosomal stalk which helps the ribosome interact with GTP-bound translation factors. In Picosynechococcus sp. (strain ATCC 27264 / PCC 7002 / PR-6) (Agmenellum quadruplicatum), this protein is Large ribosomal subunit protein uL11.